Here is a 1431-residue protein sequence, read N- to C-terminus: Probable serine/threonine-protein kinase irlA (1431 aa).

Basic residues predominate over residues 1 to 10 (MTKPIFKSKT). Disordered regions lie at residues 1 to 81 (MTKP…EKEE) and 736 to 879 (KREK…NNNK). Acidic residues predominate over residues 25-43 (NEDEEEEEGGEEGGEEEEI). Positions 46–67 (NKNSNNSSSNSNNNNNDNNNNN) are enriched in low complexity. 2 coiled-coil regions span residues 57-97 (NNNN…LDME) and 715-759 (KKRS…NNNN). A compositionally biased stretch (basic and acidic residues) spans 68–81 (GEERKVEKEEEKEE). Basic residues predominate over residues 738 to 749 (EKKKQKDKKKNK). Low complexity predominate over residues 750–776 (SNQNQKNNNNQNNQSNNNKINSPSSNK). Over residues 777-791 (LTQNVTPPSSPVNII) the composition is skewed to polar residues. Over residues 792 to 812 (TSSSTTSSSTSSTTSSTTSST) the composition is skewed to low complexity. A compositionally biased stretch (polar residues) spans 821-838 (TLPIKTSSPTKPESQKPS). A compositionally biased stretch (low complexity) spans 854 to 878 (NNNNNNNNNNNNNNNNNNNNNNNNN). Residues 860–971 (NNNNNNNNNN…QESIQLNQTL (112 aa)) adopt a coiled-coil conformation. Residues 987–1261 (RDENNIIGRG…IDTILNHPLF (275 aa)) enclose the Protein kinase domain. Residues 993-1001 (IGRGSNGTL) and K1016 each bind ATP. The active-site Proton acceptor is the D1130. Positions 1264-1431 (TNEKIKFYES…NSKDYLNIKF (168 aa)) constitute a KEN domain.

The protein belongs to the protein kinase superfamily. Ser/Thr protein kinase family.

It carries out the reaction L-seryl-[protein] + ATP = O-phospho-L-seryl-[protein] + ADP + H(+). It catalyses the reaction L-threonyl-[protein] + ATP = O-phospho-L-threonyl-[protein] + ADP + H(+). This Dictyostelium discoideum (Social amoeba) protein is Probable serine/threonine-protein kinase irlA (irlA).